The sequence spans 241 residues: MIDWLYSYPPLYPGILLKRYKRFFADVQLASGEVVTAHCPNTGPMTGVSTLGSVVQLSKSANPKRKLAYTLELIQVHDNEPTWVGVNTALPNQIVKLALAKYLFPELGSYNHIKSEVVYGVDKKSRVDFFLTGSDTERPIYLEVKNTTWAKGTLALFPDTETTRGQKHLRELMTLLPQTRSVMLYFINRGDCTEFAPGDSTDPIYGKLLREAIALGLEVLPCRFDVTPEGIRYLGLAKLVI.

Belongs to the SfsA family.

The chain is Sugar fermentation stimulation protein homolog from Trichormus variabilis (strain ATCC 29413 / PCC 7937) (Anabaena variabilis).